The sequence spans 521 residues: Zinc finger and BTB domain-containing protein 18 (521 aa).

One can recognise a BTB domain in the interval Cys24–Asp91. A disordered region spans residues Asp190 to Met230. Residues Thr197–Ala212 are compositionally biased toward low complexity. The span at Ser214–Met230 shows a compositional bias: polar residues. C2H2-type zinc fingers lie at residues Phe369–His391, Pro409–His431, Phe437–His459, and His465–His488.

Belongs to the krueppel C2H2-type zinc-finger protein family. ZBTB18 subfamily.

The protein resides in the nucleus. Transcriptional repressor that plays a role in various developmental processes. Specifically binds the consensus DNA sequence 5'-[AC]ACATCTG[GT][AC]-3' which contains the E box core, and acts by recruiting chromatin remodeling multiprotein complexes. This Xenopus tropicalis (Western clawed frog) protein is Zinc finger and BTB domain-containing protein 18 (zbtb18).